The chain runs to 435 residues: Ornithine decarboxylase (435 aa).

N6-(pyridoxal phosphate)lysine is present on Lys98. Residues Ser230, Gly268, and 301-304 (EPGR) each bind pyridoxal 5'-phosphate. 344–345 (YD) contributes to the substrate binding site. Catalysis depends on Cys380, which acts as the Proton donor; shared with dimeric partner. Residue Asp381 coordinates substrate. Position 409 (Tyr409) interacts with pyridoxal 5'-phosphate.

This sequence belongs to the Orn/Lys/Arg decarboxylase class-II family. As to quaternary structure, homodimer. Only the dimer is catalytically active, as the active sites are constructed of residues from both monomers. Pyridoxal 5'-phosphate serves as cofactor.

The enzyme catalyses L-ornithine + H(+) = putrescine + CO2. It participates in amine and polyamine biosynthesis; putrescine biosynthesis via L-ornithine pathway; putrescine from L-ornithine: step 1/1. With respect to regulation, inhibited by antizyme (AZ) in response to polyamine levels. AZ inhibits the assembly of the functional homodimer by binding to ODC monomers and targeting them for ubiquitin-independent proteolytic destruction by the 26S proteasome. In terms of biological role, catalyzes the first and rate-limiting step of polyamine biosynthesis that converts ornithine into putrescine, which is the precursor for the polyamines, spermidine and spermine. Polyamines are essential for cell proliferation and are implicated in cellular processes, ranging from DNA replication to apoptosis. The polypeptide is Ornithine decarboxylase (ODC) (Capsicum annuum (Capsicum pepper)).